The sequence spans 301 residues: Heterogeneous nuclear ribonucleoprotein D-like (301 aa).

2 consecutive RRM domains span residues 29–111 (GKMF…KGKE) and 114–193 (KKVF…QPKE). K42 carries the post-translational modification N6-methyllysine. K90 is covalently cross-linked (Glycyl lysine isopeptide (Lys-Gly) (interchain with G-Cter in SUMO2)). K97 is modified (N6-acetyllysine). Residue S122 is modified to Phosphoserine. Disordered stretches follow at residues 194–229 (VYRQ…NWNQ) and 279–301 (GQQS…YQPY). Residues 204–223 (GGRGAAAGGRGGARGRGRGQ) are compositionally biased toward gly residues. A necessary for interaction with TNPO1 region spans residues 223–301 (QGQNWNQGFN…GNHQNNYQPY (79 aa)). R289 is modified (dimethylated arginine; alternate). R289 bears the Omega-N-methylarginine; alternate mark.

As to quaternary structure, interacts with TNPO1. Interacts with ZNF148. In terms of processing, dimethylation of Arg-289 is probably of the asymmetric type. Expressed in skeletal muscle, myoblast, myotube, heart, brain, liver, kidney, heart, lung, stomach, small intestine, large intestine, spleen, and testis (at protein level). Expressed in brain, skeletal muscle, heart, lung, liver, stomach, small intestine, large intestine, kidney, spleen and testis.

The protein localises to the nucleus. The protein resides in the cytoplasm. Its function is as follows. Acts as a transcriptional regulator. Promotes transcription repression. Promotes transcription activation in differentiated myotubes. Binds to double- and single-stranded DNA sequences. Binds to the transcription suppressor CATR sequence of the COX5B promoter. Binds with high affinity to RNA molecules that contain AU-rich elements (AREs) found within the 3'-UTR of many proto-oncogenes and cytokine mRNAs. Binds both to nuclear and cytoplasmic poly(A) mRNAs. Binds to poly(G) and poly(A), but not to poly(U) or poly(C) RNA homopolymers. Binds to the 5'-ACUAGC-3' RNA consensus sequence. The protein is Heterogeneous nuclear ribonucleoprotein D-like (Hnrnpdl) of Mus musculus (Mouse).